The primary structure comprises 1547 residues: DNA topoisomerase 2 (1547 aa).

The segment at 8–30 (FNKMSSPKQNGTGEPAPAKGQKG) is disordered. Residues 9–19 (NKMSSPKQNGT) are compositionally biased toward polar residues. Residues Asn-99, Asn-128, 156-158 (SSN), and 169-176 (GRNGYGAK) each bind ATP. Residues 351–353 (KKK) form an interaction with DNA region. An ATP-binding site is contributed by 385–387 (QTK). The Toprim domain occupies 463 to 580 (CTLILTEGDS…ELLKLPFLEE (118 aa)). Residues Glu-469, Asp-549, and Asp-551 each coordinate Mg(2+). A Topo IIA-type catalytic domain is found at 723–1192 (IPSMIDGLKP…TAPMLWREDL (470 aa)). Catalysis depends on Tyr-813, which acts as the O-(5'-phospho-DNA)-tyrosine intermediate. An interaction with DNA region spans residues 996–1005 (KLQTTISMTC). Disordered stretches follow at residues 1107–1134 (TALEDDDAQESEEEEPEPDPKGKPVDPD), 1209–1249 (EELN…ISDD), 1261–1423 (KTRK…MDSD), and 1459–1547 (RQRR…SLSD). Acidic residues predominate over residues 1109–1123 (LEDDDAQESEEEEPE). Over residues 1124-1134 (PDPKGKPVDPD) the composition is skewed to basic and acidic residues. Residues 1216–1228 (KTSKAMAGKKNRK) show a composition bias toward basic residues. 2 stretches are compositionally biased toward basic and acidic residues: residues 1238–1249 (NGRRVEPKISDD) and 1294–1315 (EKPEKAEKPDKVDKAEKTDGLK). Positions 1331–1344 (TFSGSSSGEMSASD) are enriched in low complexity. A compositionally biased stretch (acidic residues) spans 1373–1383 (DDSGSDSEPEL). Composition is skewed to basic and acidic residues over residues 1384–1394 (LDNKIDSDHEA) and 1459–1488 (RQRRCDTSVPPKEKAAPKRKLMNVDKDEKK). A compositionally biased stretch (basic residues) spans 1513–1528 (KGKKKTAANPKKKAKK). A compositionally biased stretch (polar residues) spans 1537–1547 (DFNISDSSLSD).

The protein belongs to the type II topoisomerase family. In terms of assembly, homodimer. Requires Mg(2+) as cofactor. It depends on Mn(2+) as a cofactor. Ca(2+) serves as cofactor.

The protein localises to the nucleus. It carries out the reaction ATP-dependent breakage, passage and rejoining of double-stranded DNA.. In terms of biological role, control of topological states of DNA by transient breakage and subsequent rejoining of DNA strands. Topoisomerase II makes double-strand breaks. In Bombyx mori (Silk moth), this protein is DNA topoisomerase 2 (TOP2).